The following is a 189-amino-acid chain: Glycerol-3-phosphate acyltransferase (189 aa).

A run of 5 helical transmembrane segments spans residues 1-21 (MFWL…AIVL), 50-70 (KLAI…VLLA), 77-97 (LHAQ…PLYF), 111-131 (MLMA…LLTF), and 151-171 (LLAW…VMIV).

Belongs to the PlsY family. Probably interacts with PlsX.

It is found in the cell inner membrane. The catalysed reaction is an acyl phosphate + sn-glycerol 3-phosphate = a 1-acyl-sn-glycero-3-phosphate + phosphate. The protein operates within lipid metabolism; phospholipid metabolism. Catalyzes the transfer of an acyl group from acyl-phosphate (acyl-PO(4)) to glycerol-3-phosphate (G3P) to form lysophosphatidic acid (LPA). This enzyme utilizes acyl-phosphate as fatty acyl donor, but not acyl-CoA or acyl-ACP. This chain is Glycerol-3-phosphate acyltransferase, found in Pseudomonas putida (strain ATCC 47054 / DSM 6125 / CFBP 8728 / NCIMB 11950 / KT2440).